Reading from the N-terminus, the 300-residue chain is 33 kDa chaperonin (300 aa).

2 disulfide bridges follow: cysteine 247–cysteine 249 and cysteine 280–cysteine 283.

The protein belongs to the HSP33 family. In terms of processing, under oxidizing conditions two disulfide bonds are formed involving the reactive cysteines. Under reducing conditions zinc is bound to the reactive cysteines and the protein is inactive.

It is found in the cytoplasm. Functionally, redox regulated molecular chaperone. Protects both thermally unfolding and oxidatively damaged proteins from irreversible aggregation. Plays an important role in the bacterial defense system toward oxidative stress. The polypeptide is 33 kDa chaperonin (Prochlorococcus marinus (strain MIT 9515)).